Consider the following 113-residue polypeptide: MQPGGQPDMSALLAQAQQMQQQLMAAQQEMAEAEVTGQAGGGLVTATVKGTGEVVGLKIDPKVVDPDDVETLQDLVIGAIEDASNKAQEIAAQKLGPLAGGFGGGGLPGLPGF.

Belongs to the YbaB/EbfC family. In terms of assembly, homodimer.

It localises to the cytoplasm. The protein localises to the nucleoid. Binds to DNA and alters its conformation. May be involved in regulation of gene expression, nucleoid organization and DNA protection. The sequence is that of Nucleoid-associated protein RHA1_ro04210 from Rhodococcus jostii (strain RHA1).